Here is a 404-residue protein sequence, read N- to C-terminus: Probable tRNA sulfurtransferase (404 aa).

The THUMP domain occupies R60–D165. Residues M183 to L184, H208 to F209, R265, G287, and Q296 contribute to the ATP site.

It belongs to the ThiI family.

The protein localises to the cytoplasm. It catalyses the reaction [ThiI sulfur-carrier protein]-S-sulfanyl-L-cysteine + a uridine in tRNA + 2 reduced [2Fe-2S]-[ferredoxin] + ATP + H(+) = [ThiI sulfur-carrier protein]-L-cysteine + a 4-thiouridine in tRNA + 2 oxidized [2Fe-2S]-[ferredoxin] + AMP + diphosphate. The enzyme catalyses [ThiS sulfur-carrier protein]-C-terminal Gly-Gly-AMP + S-sulfanyl-L-cysteinyl-[cysteine desulfurase] + AH2 = [ThiS sulfur-carrier protein]-C-terminal-Gly-aminoethanethioate + L-cysteinyl-[cysteine desulfurase] + A + AMP + 2 H(+). It participates in cofactor biosynthesis; thiamine diphosphate biosynthesis. Its function is as follows. Catalyzes the ATP-dependent transfer of a sulfur to tRNA to produce 4-thiouridine in position 8 of tRNAs, which functions as a near-UV photosensor. Also catalyzes the transfer of sulfur to the sulfur carrier protein ThiS, forming ThiS-thiocarboxylate. This is a step in the synthesis of thiazole, in the thiamine biosynthesis pathway. The sulfur is donated as persulfide by IscS. The sequence is that of Probable tRNA sulfurtransferase from Streptococcus equi subsp. zooepidemicus (strain H70).